A 119-amino-acid polypeptide reads, in one-letter code: Large ribosomal subunit protein uL24 (119 aa).

Belongs to the universal ribosomal protein uL24 family. Part of the 50S ribosomal subunit.

In terms of biological role, one of two assembly initiator proteins, it binds directly to the 5'-end of the 23S rRNA, where it nucleates assembly of the 50S subunit. One of the proteins that surrounds the polypeptide exit tunnel on the outside of the subunit. The polypeptide is Large ribosomal subunit protein uL24 (Leptospira interrogans serogroup Icterohaemorrhagiae serovar copenhageni (strain Fiocruz L1-130)).